A 294-amino-acid chain; its full sequence is Signal peptidase I (294 aa).

Positions 1–59 (MTETTDSPSERQPGPAEPELSSRDPDIAGQVFDAAPFDAAPDADSEGDSKAAKTDEPRP) are disordered. The Cytoplasmic portion of the chain corresponds to 1-66 (MTETTDSPSE…PRPAKRSTLR (66 aa)). The span at 47–59 (GDSKAAKTDEPRP) shows a compositional bias: basic and acidic residues. The helical transmembrane segment at 67–87 (EFAVLAVIAVVLYYVMLTFVA) threads the bilayer. Over 88 to 294 (RPYLIPSESM…VRSVNPQQGR (207 aa)) the chain is Extracellular. Residues S96 and K174 contribute to the active site.

The protein belongs to the peptidase S26 family.

The protein localises to the cell membrane. The enzyme catalyses Cleavage of hydrophobic, N-terminal signal or leader sequences from secreted and periplasmic proteins.. This chain is Signal peptidase I (lepB), found in Mycobacterium tuberculosis (strain CDC 1551 / Oshkosh).